Consider the following 166-residue polypeptide: MSLLTPDSGLLFWMVIVFGIVFVILAKYGFPVITRMVDERKQYIDKSLLAAREANEQLANIKADSEMILAKAHEEQARILNEAVATRERILKEAKTQAQVEGQKLLDEAKKQIQAEKDSAISDIRRQVAVLSVDIAEKVLRKNLDDEKEQMEMIDRLLDELTVSKD.

Residues 10-30 (LLFWMVIVFGIVFVILAKYGF) form a helical membrane-spanning segment.

This sequence belongs to the ATPase B chain family. In terms of assembly, F-type ATPases have 2 components, F(1) - the catalytic core - and F(0) - the membrane proton channel. F(1) has five subunits: alpha(3), beta(3), gamma(1), delta(1), epsilon(1). F(0) has three main subunits: a(1), b(2) and c(10-14). The alpha and beta chains form an alternating ring which encloses part of the gamma chain. F(1) is attached to F(0) by a central stalk formed by the gamma and epsilon chains, while a peripheral stalk is formed by the delta and b chains.

It is found in the cell inner membrane. Its function is as follows. F(1)F(0) ATP synthase produces ATP from ADP in the presence of a proton or sodium gradient. F-type ATPases consist of two structural domains, F(1) containing the extramembraneous catalytic core and F(0) containing the membrane proton channel, linked together by a central stalk and a peripheral stalk. During catalysis, ATP synthesis in the catalytic domain of F(1) is coupled via a rotary mechanism of the central stalk subunits to proton translocation. Component of the F(0) channel, it forms part of the peripheral stalk, linking F(1) to F(0). This is ATP synthase subunit b from Phocaeicola vulgatus (strain ATCC 8482 / DSM 1447 / JCM 5826 / CCUG 4940 / NBRC 14291 / NCTC 11154) (Bacteroides vulgatus).